We begin with the raw amino-acid sequence, 103 residues long: Protein Rev (103 aa).

Position 5 is a phosphoserine; by host CK2 (serine 5). The segment at 18-26 is homomultimerization; the sequence is VIKILYQSN. Residues 25–34 show a composition bias toward polar residues; the sequence is SNPYPNDSGT. Disordered stretches follow at residues 25–48 and 66–103; these read SNPY…WRAR and GLQE…TATT. A Nuclear localization signal and RNA-binding (RRE) motif is present at residues 34-50; it reads TRQARKNRRRRWRARQR. Positions 36–48 are enriched in basic residues; it reads QARKNRRRRWRAR. The Nuclear export signal and binding to XPO1 motif lies at 73–84; sequence LPLPPLDRLSLN. Serine 92 is modified (phosphoserine; by host).

This sequence belongs to the HIV-1 REV protein family. In terms of assembly, homomultimer; when bound to the RRE. Multimeric assembly is essential for activity and may involve XPO1. Binds to human KPNB1, XPO1, TNPO1, RANBP5 and IPO7. Interacts with the viral Integrase. Interacts with human KHDRBS1. Interacts with human NAP1; this interaction decreases Rev multimerization and stimulates its activity. Interacts with human DEAD-box helicases DDX3 and DDX24; these interactions may serve for viral RNA export to the cytoplasm and packaging, respectively. Interacts with human PSIP1; this interaction may inhibit HIV-1 DNA integration by promoting dissociation of the Integrase-LEDGF/p75 complex. Post-translationally, asymmetrically arginine dimethylated at one site by host PRMT6. Methylation impairs the RNA-binding activity and export of viral RNA from the nucleus to the cytoplasm. Phosphorylated by protein kinase CK2. Presence of, and maybe binding to the N-terminus of the regulatory beta subunit of CK2 is necessary for CK2-mediated Rev's phosphorylation.

It is found in the host nucleus. Its subcellular location is the host nucleolus. It localises to the host cytoplasm. In terms of biological role, escorts unspliced or incompletely spliced viral pre-mRNAs (late transcripts) out of the nucleus of infected cells. These pre-mRNAs carry a recognition sequence called Rev responsive element (RRE) located in the env gene, that is not present in fully spliced viral mRNAs (early transcripts). This function is essential since most viral proteins are translated from unspliced or partially spliced pre-mRNAs which cannot exit the nucleus by the pathway used by fully processed cellular mRNAs. Rev itself is translated from a fully spliced mRNA that readily exits the nucleus. Rev's nuclear localization signal (NLS) binds directly to KPNB1/Importin beta-1 without previous binding to KPNA1/Importin alpha-1. KPNB1 binds to the GDP bound form of RAN (Ran-GDP) and targets Rev to the nucleus. In the nucleus, the conversion from Ran-GDP to Ran-GTP dissociates Rev from KPNB1 and allows Rev's binding to the RRE in viral pre-mRNAs. Rev multimerization on the RRE via cooperative assembly exposes its nuclear export signal (NES) to the surface. Rev can then form a complex with XPO1/CRM1 and Ran-GTP, leading to nuclear export of the complex. Conversion from Ran-GTP to Ran-GDP mediates dissociation of the Rev/RRE/XPO1/RAN complex, so that Rev can return to the nucleus for a subsequent round of export. Beside KPNB1, also seems to interact with TNPO1/Transportin-1, RANBP5/IPO5 and IPO7/RANBP7 for nuclear import. The nucleoporin-like HRB/RIP is an essential cofactor that probably indirectly interacts with Rev to release HIV RNAs from the perinuclear region to the cytoplasm. The protein is Protein Rev of Pan troglodytes (Chimpanzee).